Consider the following 206-residue polypeptide: Small ribosomal subunit protein uS4 (206 aa).

In terms of domain architecture, S4 RNA-binding spans Arg94–Ile157.

Belongs to the universal ribosomal protein uS4 family. In terms of assembly, part of the 30S ribosomal subunit. Contacts protein S5. The interaction surface between S4 and S5 is involved in control of translational fidelity.

One of the primary rRNA binding proteins, it binds directly to 16S rRNA where it nucleates assembly of the body of the 30S subunit. In terms of biological role, with S5 and S12 plays an important role in translational accuracy. The sequence is that of Small ribosomal subunit protein uS4 from Roseiflexus sp. (strain RS-1).